An 836-amino-acid chain; its full sequence is General vesicular transport factor p115 (836 aa).

Positions 1-22 are disordered; that stretch reads MEFLKSGIKTVLGSTEPGQQPS. Residues 12 to 22 show a composition bias toward polar residues; sequence LGSTEPGQQPS. ARM repeat units follow at residues 24–64, 65–124, 126–166, 169–210, 211–256, 316–359, 368–413, 424–463, 477–518, 523–577, and 579–636; these read AETV…VGAQ, GMPP…IKTP, HVTL…LILV, MGVS…VAFE, NAFD…FKEG, RLLH…LGRV, PAIV…QTLL, STGQ…EELL, TLLE…KALL, TMAY…IIKR, and GQES…LVSG. 2 coiled-coil regions span residues 663-707 and 744-806; these read IIRG…DQNT and NMYF…EEAG. Residues 803-836 are disordered; it reads EEAGSTNTLPTSNVAPSVPAAGGGSPIPSGTASR. The segment covering 806–816 has biased composition (polar residues); sequence GSTNTLPTSNV. Residues 817-836 show a composition bias toward low complexity; that stretch reads APSVPAAGGGSPIPSGTASR.

The protein belongs to the VDP/USO1/EDE1 family.

The protein localises to the cytoplasm. It is found in the golgi apparatus. Its subcellular location is the golgi stack. The protein resides in the golgi stack membrane. It localises to the endoplasmic reticulum. The protein localises to the endoplasmic reticulum membrane. Functionally, essential for maintaining the architecture of the Golgi stacks and for normal organization of the transitional endoplasmic reticulum (tER). Required for both the formation of the Golgi stacks and the maintenance of the individual cisternae. In Drosophila melanogaster (Fruit fly), this protein is General vesicular transport factor p115.